Reading from the N-terminus, the 231-residue chain is Flagellar L-ring protein 2 (231 aa).

A signal peptide spans 1 to 15 (MKNLILILPLLMLTG). C16 carries the N-palmitoyl cysteine lipid modification. C16 is lipidated: S-diacylglycerol cysteine. A disordered region spans residues 30-54 (SPVGSGLRTQADPIPVTPRMRTPVS).

This sequence belongs to the FlgH family. In terms of assembly, the basal body constitutes a major portion of the flagellar organelle and consists of four rings (L,P,S, and M) mounted on a central rod.

It is found in the cell outer membrane. The protein localises to the bacterial flagellum basal body. Assembles around the rod to form the L-ring and probably protects the motor/basal body from shearing forces during rotation. In Bradyrhizobium diazoefficiens (strain JCM 10833 / BCRC 13528 / IAM 13628 / NBRC 14792 / USDA 110), this protein is Flagellar L-ring protein 2.